A 248-amino-acid chain; its full sequence is 14-3-3 protein sigma (248 aa).

A phosphoserine mark is found at Ser5, Ser74, and Ser248.

This sequence belongs to the 14-3-3 family. As to quaternary structure, homodimer. Interacts with KRT17 and SAMSN1. Found in a complex with XPO7, EIF4A1, ARHGAP1, VPS26A, VPS29 and VPS35. Interacts with GAB2. Interacts with SRPK2. Interacts with COPS6. Interacts with COP1; this interaction leads to proteasomal degradation. Interacts with the 'Thr-369' phosphorylated form of DAPK2. Interacts with PI4KB. Interacts with SLITRK1. Interacts with LRRK2; this interaction is dependent on LRRK2 phosphorylation. Interacts with PKP3 (via N-terminus); the interaction maintains the cytoplasmic pool of PKP3, facilitates PKP3 exchange at desmosomes and restricts PKP3 localization to existing desmosome cell junctions. Interacts with LCP2. Post-translationally, ubiquitinated. Ubiquitination by RFFL induces proteasomal degradation and indirectly regulates p53/TP53 activation.

The protein resides in the cytoplasm. It localises to the nucleus. It is found in the secreted. Adapter protein implicated in the regulation of a large spectrum of both general and specialized signaling pathways. Binds to a large number of partners, usually by recognition of a phosphoserine or phosphothreonine motif. Binding generally results in the modulation of the activity of the binding partner. Promotes cytosolic retention of GBP1 GTPase by binding to phosphorylated GBP1, thereby inhibiting the innate immune response. Also acts as a TP53/p53-regulated inhibitor of G2/M progression. When bound to KRT17, regulates protein synthesis and epithelial cell growth by stimulating Akt/mTOR pathway. Acts to maintain desmosome cell junction adhesion in epithelial cells via interacting with and sequestering PKP3 to the cytoplasm, thereby restricting its translocation to existing desmosome structures and therefore maintaining desmosome protein homeostasis. Also acts to facilitate PKP3 exchange at desmosome plaques, thereby maintaining keratinocyte intercellular adhesion. May also regulate MDM2 autoubiquitination and degradation and thereby activate p53/TP53. The chain is 14-3-3 protein sigma (SFN) from Bos taurus (Bovine).